The primary structure comprises 524 residues: Glutamyl-tRNA(Gln) amidotransferase subunit A (524 aa).

Active-site charge relay system residues include lysine 109 and serine 184. The Acyl-ester intermediate role is filled by serine 208.

It belongs to the amidase family. GatA subfamily. Heterotrimer of A, B and C subunits.

The catalysed reaction is L-glutamyl-tRNA(Gln) + L-glutamine + ATP + H2O = L-glutaminyl-tRNA(Gln) + L-glutamate + ADP + phosphate + H(+). Its function is as follows. Allows the formation of correctly charged Gln-tRNA(Gln) through the transamidation of misacylated Glu-tRNA(Gln) in organisms which lack glutaminyl-tRNA synthetase. The reaction takes place in the presence of glutamine and ATP through an activated gamma-phospho-Glu-tRNA(Gln). The protein is Glutamyl-tRNA(Gln) amidotransferase subunit A of Tropheryma whipplei (strain TW08/27) (Whipple's bacillus).